A 64-amino-acid polypeptide reads, in one-letter code: Large ribosomal subunit protein bL32 (64 aa).

A disordered region spans residues 1–20 (MALPKYKTSRANTHSRRANW).

Belongs to the bacterial ribosomal protein bL32 family.

The sequence is that of Large ribosomal subunit protein bL32 from Bifidobacterium adolescentis (strain ATCC 15703 / DSM 20083 / NCTC 11814 / E194a).